The sequence spans 355 residues: Uroporphyrinogen decarboxylase (355 aa).

Substrate is bound by residues 27 to 31 (RQAGR), Asp77, Tyr154, Thr209, and His327.

This sequence belongs to the uroporphyrinogen decarboxylase family. In terms of assembly, homodimer.

Its subcellular location is the cytoplasm. It carries out the reaction uroporphyrinogen III + 4 H(+) = coproporphyrinogen III + 4 CO2. Its pathway is porphyrin-containing compound metabolism; protoporphyrin-IX biosynthesis; coproporphyrinogen-III from 5-aminolevulinate: step 4/4. Catalyzes the decarboxylation of four acetate groups of uroporphyrinogen-III to yield coproporphyrinogen-III. The protein is Uroporphyrinogen decarboxylase of Yersinia pseudotuberculosis serotype O:1b (strain IP 31758).